The sequence spans 478 residues: Ribulose bisphosphate carboxylase large chain (478 aa).

Residues methionine 1–serine 2 constitute a propeptide that is removed on maturation. N-acetylproline is present on proline 3. Lysine 14 carries the post-translational modification N6,N6,N6-trimethyllysine. Residues asparagine 123 and threonine 173 each contribute to the substrate site. The active-site Proton acceptor is the lysine 175. Lysine 177 contacts substrate. Residues lysine 201, aspartate 203, and glutamate 204 each coordinate Mg(2+). Lysine 201 bears the N6-carboxylysine mark. Histidine 294 serves as the catalytic Proton acceptor. Substrate-binding residues include arginine 295, histidine 327, and serine 379.

This sequence belongs to the RuBisCO large chain family. Type I subfamily. Heterohexadecamer of 8 large chains and 8 small chains; disulfide-linked. The disulfide link is formed within the large subunit homodimers. The cofactor is Mg(2+). Post-translationally, the disulfide bond which can form in the large chain dimeric partners within the hexadecamer appears to be associated with oxidative stress and protein turnover.

It localises to the plastid. Its subcellular location is the chloroplast. The enzyme catalyses 2 (2R)-3-phosphoglycerate + 2 H(+) = D-ribulose 1,5-bisphosphate + CO2 + H2O. The catalysed reaction is D-ribulose 1,5-bisphosphate + O2 = 2-phosphoglycolate + (2R)-3-phosphoglycerate + 2 H(+). In terms of biological role, ruBisCO catalyzes two reactions: the carboxylation of D-ribulose 1,5-bisphosphate, the primary event in carbon dioxide fixation, as well as the oxidative fragmentation of the pentose substrate in the photorespiration process. Both reactions occur simultaneously and in competition at the same active site. This Lemna minor (Common duckweed) protein is Ribulose bisphosphate carboxylase large chain.